Reading from the N-terminus, the 380-residue chain is Cytochrome b (380 aa).

Helical transmembrane passes span 34–54, 78–99, 114–134, and 179–199; these read FGSL…LLAM, WLIR…FLHI, WNTG…GYVL, and FFAL…IHLT. The heme b site is built by histidine 84 and histidine 98. Positions 183 and 197 each coordinate heme b. A ubiquinone is bound at residue histidine 202. 4 consecutive transmembrane segments (helical) span residues 227–247, 289–309, 321–341, and 348–368; these read IKDI…ALFS, LGGV…PFLH, LSQT…WIGS, and FIII…ILFP.

The protein belongs to the cytochrome b family. In terms of assembly, the cytochrome bc1 complex contains 11 subunits: 3 respiratory subunits (MT-CYB, CYC1 and UQCRFS1), 2 core proteins (UQCRC1 and UQCRC2) and 6 low-molecular weight proteins (UQCRH/QCR6, UQCRB/QCR7, UQCRQ/QCR8, UQCR10/QCR9, UQCR11/QCR10 and a cleavage product of UQCRFS1). This cytochrome bc1 complex then forms a dimer. Heme b serves as cofactor.

Its subcellular location is the mitochondrion inner membrane. In terms of biological role, component of the ubiquinol-cytochrome c reductase complex (complex III or cytochrome b-c1 complex) that is part of the mitochondrial respiratory chain. The b-c1 complex mediates electron transfer from ubiquinol to cytochrome c. Contributes to the generation of a proton gradient across the mitochondrial membrane that is then used for ATP synthesis. The protein is Cytochrome b (MT-CYB) of Alectoris chukar (Chukar partridge).